Consider the following 147-residue polypeptide: Large ribosomal subunit protein uL13 (147 aa).

It belongs to the universal ribosomal protein uL13 family. In terms of assembly, part of the 50S ribosomal subunit.

Functionally, this protein is one of the early assembly proteins of the 50S ribosomal subunit, although it is not seen to bind rRNA by itself. It is important during the early stages of 50S assembly. This chain is Large ribosomal subunit protein uL13, found in Leuconostoc citreum (strain KM20).